Consider the following 254-residue polypeptide: Alcohol dehydrogenase (254 aa).

10–33 provides a ligand contact to NAD(+); that stretch reads FVAGLGGIGLDTSREIVKSGPKNL. Serine 138 contributes to the substrate binding site. Residue tyrosine 151 is the Proton acceptor of the active site.

Belongs to the short-chain dehydrogenases/reductases (SDR) family. Homodimer.

It catalyses the reaction a primary alcohol + NAD(+) = an aldehyde + NADH + H(+). The enzyme catalyses a secondary alcohol + NAD(+) = a ketone + NADH + H(+). In Drosophila lacicola (Fruit fly), this protein is Alcohol dehydrogenase (Adh1).